The primary structure comprises 226 residues: UPF0111 protein AF_1799 (226 aa).

Belongs to the UPF0111 family.

The polypeptide is UPF0111 protein AF_1799 (Archaeoglobus fulgidus (strain ATCC 49558 / DSM 4304 / JCM 9628 / NBRC 100126 / VC-16)).